The sequence spans 501 residues: MAAAALLLLAAAAAAVVVAMALRWLLLLGGPAAGRLGKRARMPPGSTGLPLIGETLRLISAYKTPNPEPFIDERVARHGGVFTTHVFGERTVFSADPAFNRLLLAAEGRAVHSSYPSSIATLLGARSLLLTRGAAHKRLHSLTLTRLGRPASPPLLAHIDRLVLATMRQWEPAATVRLMDEAKKITFNLTVKQLVSIEPGPWTESLRREYVKLIDGFFSIPFPLAYFLPFTTYGQALKARKKVAGALREVIKKRMEEKAENGGSIGDDEGKKEKKDMVEELLQAEGGSFSEEEMVDFCLSLLVAGYETTSVLMTLAVKFLTETPAALAELKEEHANIRDMKGKNQPLEWSDYKSMPFTQCVINETLRVGNIISGVFRRANTDIHYKDYTIPKGCKIFASFRAVHLNNEHYENARTFNPWRWQINNKLQNAVGANIFTPFGGGPRLCPGYELARVVVSIFLHHLVTRFSWEETEEDRLVFFPTTRTLKGYPINLRLLSESIC.

A helical membrane pass occupies residues 2 to 22 (AAAALLLLAAAAAAVVVAMAL). Cys-446 contacts heme.

Belongs to the cytochrome P450 family. The cofactor is heme. In terms of tissue distribution, highly expressed in shoot apex and inflorenscence. Expressed in roots, stems, leaf blades and leaf sheaths.

The protein resides in the cell membrane. It functions in the pathway plant hormone biosynthesis; brassinosteroid biosynthesis. Catalyzes the C23-alpha-hydroxylation step in brassinosteroid biosynthesis. Converts 6-deoxocathasterone to 6-deoxoteasterone in the late C6-oxidation pathway and cathasterone to teasterone (TE) in the early C6-oxidation pathway of brassinolide (BL) biosynthesis. The polypeptide is Cytochrome P450 90A4 (Oryza sativa subsp. japonica (Rice)).